Consider the following 434-residue polypeptide: uncharacterized protein (434 aa).

The next 11 membrane-spanning stretches (helical) occupy residues 50-70, 72-92, 95-115, 135-155, 158-178, 179-199, 229-249, 288-308, 319-339, 376-396, and 412-432; these read GSIA…SFTL, TGLL…VLAI, LMAF…LLPV, SPVV…QFGW, SLIA…YFPH, LNPE…IAIT, LPYI…KIFA, GFVP…VAGF, PNPM…VLLL, IFAA…AIYF, and VVAV…GLFV.

The protein resides in the cell membrane. This is an uncharacterized protein from Escherichia coli (strain K12).